The primary structure comprises 256 residues: Homeobox-leucine zipper protein HOX28 (256 aa).

A disordered region spans residues 56-86 (ACSPGSPVSSGSGKRGSGSGSGDEVDDAGCD). Positions 58 to 67 (SPGSPVSSGS) are enriched in low complexity. Residues 91-150 (GARKKLRLSKDQAAVLEECFKTHHTLTPKQKVALAKSLNLRPRQVEVWFQNRRARTKLKQ) constitute a DNA-binding region (homeobox). A leucine-zipper region spans residues 149–193 (KQTEVDCEHLKRWCDQLADDNRRLHKELAELRALKATPTPPAAAP).

It belongs to the HD-ZIP homeobox family. Class II subfamily. Expressed in seedlings, roots, stems and panicles.

Its subcellular location is the nucleus. Functionally, probable transcription factor. The chain is Homeobox-leucine zipper protein HOX28 (HOX28) from Oryza sativa subsp. indica (Rice).